The sequence spans 229 residues: Endonuclease V (229 aa).

Residues aspartate 46 and aspartate 114 each contribute to the Mg(2+) site.

The protein belongs to the endonuclease V family. Requires Mg(2+) as cofactor.

The protein resides in the cytoplasm. The catalysed reaction is Endonucleolytic cleavage at apurinic or apyrimidinic sites to products with a 5'-phosphate.. In terms of biological role, DNA repair enzyme involved in the repair of deaminated bases. Selectively cleaves double-stranded DNA at the second phosphodiester bond 3' to a deoxyinosine leaving behind the intact lesion on the nicked DNA. The chain is Endonuclease V from Streptomyces avermitilis (strain ATCC 31267 / DSM 46492 / JCM 5070 / NBRC 14893 / NCIMB 12804 / NRRL 8165 / MA-4680).